We begin with the raw amino-acid sequence, 87 residues long: Toxin Cll4 (87 aa).

The signal sequence occupies residues 1–19 (MNSLLMITACLALIGTVWA). Residues 20–85 (KEGYIVNYHD…VWPLPKKRCN (66 aa)) form the LCN-type CS-alpha/beta domain. Cystine bridges form between cysteine 31–cysteine 84, cysteine 35–cysteine 60, cysteine 44–cysteine 65, and cysteine 48–cysteine 67. Asparagine 85 carries the post-translational modification Asparagine amide.

It belongs to the long (4 C-C) scorpion toxin superfamily. Sodium channel inhibitor family. Beta subfamily. Expressed by the venom gland.

The protein localises to the secreted. Beta toxins bind voltage-independently at site-4 of sodium channels (Nav) and shift the voltage of activation toward more negative potentials thereby affecting sodium channel activation and promoting spontaneous and repetitive firing. This Centruroides limpidus (Mexican scorpion) protein is Toxin Cll4.